We begin with the raw amino-acid sequence, 413 residues long: Peptidase T (413 aa).

H84 serves as a coordination point for Zn(2+). The active site involves D86. D146 lines the Zn(2+) pocket. Catalysis depends on E180, which acts as the Proton acceptor. Positions 181, 203, and 385 each coordinate Zn(2+).

Belongs to the peptidase M20B family. Zn(2+) serves as cofactor.

It localises to the cytoplasm. The catalysed reaction is Release of the N-terminal residue from a tripeptide.. In terms of biological role, cleaves the N-terminal amino acid of tripeptides. The sequence is that of Peptidase T from Limosilactobacillus fermentum (strain NBRC 3956 / LMG 18251) (Lactobacillus fermentum).